We begin with the raw amino-acid sequence, 539 residues long: MVNLCNLLLKYDHFSKVEDDIFIYIDRVLENASEIYVRQQKAKRELECLEDQLAEKQKQSNRCVLPVPRSPVKRRKVQSLDSPLSAQKENVSILEDSTIFPNKSDSDVSAKLELNILDSEEPFFALTQSPPPAAAPQSPSPRAILSPRNVSKTSPLRPMQLLFPEENKSEKKPLLRESRFGKSVKLLESSSVVAEKSNTPTTPKTTPNGKWTGKNANATIETSNTDHTPPSGLKRFLSLADSNQRFRQVKLNFPRQTKQSPMNEPEHNSVNDTLFSDFVVPTPPSVANKSKFLKSLRMKKQSTLISRAQDDKPGTKGGSDETSSSTAASNERQPMFPNDNDDDDIDQTYCPGVESTSKLSKGLSFKIKQEPESQQKERIPLKVPSNKKLECLSDHILGVGEDSESNEIIVLPAPSQQSVISVAESQNATEIFISELNGENAKRMDAVTIETNPSNVPRVNRELGELSGSVKPYTRGYEQPSPQGLCIDCTMLYQYHTTRGVSNDTARSKLPRNCRNCRVAQLHSTPPGFWDPDFLPTPE.

Asparagine 31, asparagine 90, asparagine 102, asparagine 149, and asparagine 167 each carry an N-linked (GlcNAc...) asparagine glycan. Residues 126 to 153 (LTQSPPPAAAPQSPSPRAILSPRNVSKT) form a disordered region. Positions 192 to 215 (VVAEKSNTPTTPKTTPNGKWTGKN) are enriched in low complexity. Residues 192-231 (VVAEKSNTPTTPKTTPNGKWTGKNANATIETSNTDHTPPS) are disordered. A compositionally biased stretch (polar residues) spans 216-228 (ANATIETSNTDHT). Asparagine 217, asparagine 271, and asparagine 288 each carry an N-linked (GlcNAc...) asparagine glycan. The tract at residues 303–355 (TLISRAQDDKPGTKGGSDETSSSTAASNERQPMFPNDNDDDDIDQTYCPGVES) is disordered. Over residues 320–332 (DETSSSTAASNER) the composition is skewed to polar residues. N-linked (GlcNAc...) asparagine glycosylation is found at asparagine 427 and asparagine 503.

Saliva (at protein level). Female salivary gland. Female midgut.

It localises to the secreted. Functionally, binds heparan sulfate proteoglycans present on the mammalian cell surface. Modulates host immune responses at the site of inoculation via decreasing the expression of TNF-alpha/TNF, IL-1beta/IL1B, IFN-gamma/IFNG, IL4, MMP9, TGF-beta and ICAM1. (Microbial infection) Interacts with the surface of Plasmodium berghei sporozoites. Promotes Plasmodium berghei transmission to the mouse host. Does not affect Plasmodium berghei sporozoite viability. In terms of biological role, (Microbial infection) Interacts with the surface of Plasmodium falciparum sporozoites. This Anopheles gambiae (African malaria mosquito) protein is Sporozoite-associated protein.